Reading from the N-terminus, the 425-residue chain is MAEIMHVFAREILDSRGNPTVEAEVFLDDGSHGVAGVPSGASTGVHEAHELRDGGDRYLGKGVLKAVENVNEEIGDELAGLEADDQRLIDEAMIKLDGTANKSRLGANAILGVSMAVAKAAADSAGLPLFRYIGGPNAHVLPVPMMNIINGGAHADSGVDVQEFMIAPIGAETFSEALRNGAEVYHALKSVIKEKGLSTGLGDEGGFAPSVGSTREALDLIVEAIEKAGFTPGKDIALALDVASSEFFKDGTYHFEGGQHSAAEMANVYAELVDAYPIVSIEDPLQEDDWEGYTNLTATIGDKVQIVGDDFFVTNPERLKEGIAKKAANSILVKVNQIGTLTETFDAVDMAHRAGYTSMMSHRSGETEDTTIADLAVALNCGQIKTGAPARSDRVAKYNQLLRIEQLLGDAGVYAGRSAFPRFQG.

Residue Gln162 participates in (2R)-2-phosphoglycerate binding. Glu204 functions as the Proton donor in the catalytic mechanism. Mg(2+)-binding residues include Asp241, Glu282, and Asp309. (2R)-2-phosphoglycerate is bound by residues Lys334, Arg363, Ser364, and Lys385. The active-site Proton acceptor is Lys334.

This sequence belongs to the enolase family. The cofactor is Mg(2+).

It is found in the cytoplasm. The protein resides in the secreted. Its subcellular location is the cell surface. It carries out the reaction (2R)-2-phosphoglycerate = phosphoenolpyruvate + H2O. It participates in carbohydrate degradation; glycolysis; pyruvate from D-glyceraldehyde 3-phosphate: step 4/5. Its function is as follows. Catalyzes the reversible conversion of 2-phosphoglycerate (2-PG) into phosphoenolpyruvate (PEP). It is essential for the degradation of carbohydrates via glycolysis. In Corynebacterium glutamicum (strain R), this protein is Enolase.